We begin with the raw amino-acid sequence, 140 residues long: Protein ARABIDOPSIS THALIANA ANTHER 7 (140 aa).

Positions 1-20 (MKIHAILVVAFLVLMKTAVS) are cleaved as a signal peptide. Disulfide bonds link Cys-29/Cys-87, Cys-39/Cys-54, Cys-55/Cys-111, and Cys-85/Cys-125.

This sequence belongs to the plant LTP family. Tapetum-specific. Also present in pollen.

Its subcellular location is the endoplasmic reticulum lumen. The polypeptide is Protein ARABIDOPSIS THALIANA ANTHER 7 (Arabidopsis thaliana (Mouse-ear cress)).